The chain runs to 323 residues: Beta-ketoacyl-[acyl-carrier-protein] synthase III 1 (323 aa).

Active-site residues include Cys114 and His254. The segment at 255–259 (QANLR) is ACP-binding. The active site involves Asn284.

This sequence belongs to the thiolase-like superfamily. FabH family. As to quaternary structure, homodimer.

Its subcellular location is the cytoplasm. It carries out the reaction malonyl-[ACP] + acetyl-CoA + H(+) = 3-oxobutanoyl-[ACP] + CO2 + CoA. Its pathway is lipid metabolism; fatty acid biosynthesis. Catalyzes the condensation reaction of fatty acid synthesis by the addition to an acyl acceptor of two carbons from malonyl-ACP. Catalyzes the first condensation reaction which initiates fatty acid synthesis and may therefore play a role in governing the total rate of fatty acid production. Possesses both acetoacetyl-ACP synthase and acetyl transacylase activities. Its substrate specificity determines the biosynthesis of branched-chain and/or straight-chain of fatty acids. This Lactiplantibacillus plantarum (strain ATCC BAA-793 / NCIMB 8826 / WCFS1) (Lactobacillus plantarum) protein is Beta-ketoacyl-[acyl-carrier-protein] synthase III 1.